A 1010-amino-acid polypeptide reads, in one-letter code: Polyhomeotic-like protein 1 (1010 aa).

Over residues 1–22 the composition is skewed to low complexity; it reads METESEQNSSSTNGSSSSGASS. 6 disordered regions span residues 1–25, 212–243, 259–312, 444–506, 565–588, and 646–678; these read METE…SRPQ, NQQA…LSQT, GQSL…TGVV, QQQG…SKPP, GAVQ…PGAL, and KRKA…SPKV. Residues 212-228 are compositionally biased toward polar residues; sequence NQQASAQGPQMPGSTQK. A compositionally biased stretch (gly residues) spans 279–292; that stretch reads MGPGGGGQAPGGLG. The span at 453–463 shows a compositional bias: pro residues; sequence PQPPQVPPTQQ. The segment covering 464–480 has biased composition (low complexity); it reads VPPSQSQQQAQTLVVQP. A compositionally biased stretch (pro residues) spans 488 to 500; the sequence is TLPPEPTSKPPIP. A compositionally biased stretch (low complexity) spans 575–587; it reads ASSPPSSQAAPGA. Serine 651 carries the post-translational modification Phosphoserine. Residue lysine 769 forms a Glycyl lysine isopeptide (Lys-Gly) (interchain with G-Cter in SUMO2) linkage. The disordered stretch occupies residues 772–794; the sequence is QAGLPTGLNESQPSGPLGGDSPS. The FCS-type zinc finger occupies 797–831; the sequence is LEKKANLLKCEYCGKYAPAEQFRGSKRFCSMTCAK. Positions 806, 809, 825, and 829 each coordinate Zn(2+). The disordered stretch occupies residues 854 to 928; sequence ASYARVRRRG…LGNTITTPST (75 aa). Position 904 is a phosphoserine (serine 904). Threonine 928 is subject to Phosphothreonine. The SAM domain maps to 946–1010; sequence WSVEEVYEFI…CAKINVLKET (65 aa).

Homodimer. Component of a PRC1-like complex. Interacts with the SAM domain of SCMH1 via its SAM domain in vitro. Interacts with RNF2 and CBX7. Interacts with PHC2. Interacts with BMI1. In terms of tissue distribution, highly expressed in testis with lower levels in most other tissues. Expressed in embryonic stem cells.

It localises to the nucleus. Its function is as follows. Component of a Polycomb group (PcG) multiprotein PRC1-like complex, a complex class required to maintain the transcriptionally repressive state of many genes, including Hox genes, throughout development. PcG PRC1 complex acts via chromatin remodeling and modification of histones; it mediates monoubiquitination of histone H2A 'Lys-119', rendering chromatin heritably changed in its expressibility. Required for proper control of cellular levels of GMNN expression. The polypeptide is Polyhomeotic-like protein 1 (Mus musculus (Mouse)).